A 347-amino-acid chain; its full sequence is CD5 antigen-like (347 aa).

Positions 1–19 (MALLFSLILAICTRPGFLA) are cleaved as a signal peptide. 3 consecutive SRCR domains span residues 24 to 125 (VRLV…ASCE), 138 to 239 (VRLA…VECE), and 244 to 346 (LRLV…VICS). Disulfide bonds link cysteine 33-cysteine 67, cysteine 49-cysteine 114, cysteine 62-cysteine 124, cysteine 96-cysteine 106, cysteine 163-cysteine 228, cysteine 176-cysteine 238, cysteine 208-cysteine 218, cysteine 253-cysteine 287, cysteine 269-cysteine 335, cysteine 282-cysteine 345, and cysteine 315-cysteine 325.

In terms of assembly, interacts with FASN; the interaction is direct. Interacts (via SRCR2 and SRCR3) with pentameric IgM (via Fc region); disulfide-linked. Not N-glycosylated. Probably not O-glycosylated. Expressed in spleen, lymph node, thymus, bone marrow, and fetal liver, but not in non-lymphoid tissues.

The protein resides in the secreted. The protein localises to the cytoplasm. In terms of biological role, secreted protein that acts as a key regulator of lipid synthesis: mainly expressed by macrophages in lymphoid and inflamed tissues and regulates mechanisms in inflammatory responses, such as infection or atherosclerosis. Able to inhibit lipid droplet size in adipocytes. Following incorporation into mature adipocytes via CD36-mediated endocytosis, associates with cytosolic FASN, inhibiting fatty acid synthase activity and leading to lipolysis, the degradation of triacylglycerols into glycerol and free fatty acids (FFA). CD5L-induced lipolysis occurs with progression of obesity: participates in obesity-associated inflammation following recruitment of inflammatory macrophages into adipose tissues, a cause of insulin resistance and obesity-related metabolic disease. Regulation of intracellular lipids mediated by CD5L has a direct effect on transcription regulation mediated by nuclear receptors ROR-gamma (RORC). Acts as a key regulator of metabolic switch in T-helper Th17 cells. Regulates the expression of pro-inflammatory genes in Th17 cells by altering the lipid content and limiting synthesis of cholesterol ligand of RORC, the master transcription factor of Th17-cell differentiation. CD5L is mainly present in non-pathogenic Th17 cells, where it decreases the content of polyunsaturated fatty acyls (PUFA), affecting two metabolic proteins MSMO1 and CYP51A1, which synthesize ligands of RORC, limiting RORC activity and expression of pro-inflammatory genes. Participates in obesity-associated autoimmunity via its association with IgM, interfering with the binding of IgM to Fcalpha/mu receptor and enhancing the development of long-lived plasma cells that produce high-affinity IgG autoantibodies. Also acts as an inhibitor of apoptosis in macrophages: promotes macrophage survival from the apoptotic effects of oxidized lipids in case of atherosclerosis. Involved in early response to microbial infection against various pathogens by acting as a pattern recognition receptor and by promoting autophagy. This Homo sapiens (Human) protein is CD5 antigen-like (CD5L).